Reading from the N-terminus, the 946-residue chain is Aminopeptidase N (946 aa).

The signal sequence occupies residues 1–15 (MRLLICLTLLGLVCG). A glycan (N-linked (GlcNAc...) asparagine) is linked at N60. A substrate-binding site is contributed by 308–312 (GAMEN). H344 contributes to the Zn(2+) binding site. Catalysis depends on E345, which acts as the Proton acceptor. 2 residues coordinate Zn(2+): H348 and E367. 2 N-linked (GlcNAc...) asparagine glycosylation sites follow: N550 and N605. Cystine bridges form between C715/C722 and C751/C787.

This sequence belongs to the peptidase M1 family. Zn(2+) is required as a cofactor.

Its subcellular location is the cell membrane. It catalyses the reaction Release of an N-terminal amino acid, Xaa-|-Yaa- from a peptide, amide or arylamide. Xaa is preferably Ala, but may be most amino acids including Pro (slow action). When a terminal hydrophobic residue is followed by a prolyl residue, the two may be released as an intact Xaa-Pro dipeptide.. The polypeptide is Aminopeptidase N (APN1) (Plutella xylostella (Diamondback moth)).